The following is a 183-amino-acid chain: Acireductone dioxygenase (183 aa).

4 residues coordinate Fe(2+): histidine 99, histidine 101, glutamate 105, and histidine 144. Histidine 99, histidine 101, glutamate 105, and histidine 144 together coordinate Ni(2+).

It belongs to the acireductone dioxygenase (ARD) family. As to quaternary structure, monomer. Fe(2+) serves as cofactor. Ni(2+) is required as a cofactor.

The enzyme catalyses 1,2-dihydroxy-5-(methylsulfanyl)pent-1-en-3-one + O2 = 3-(methylsulfanyl)propanoate + CO + formate + 2 H(+). The catalysed reaction is 1,2-dihydroxy-5-(methylsulfanyl)pent-1-en-3-one + O2 = 4-methylsulfanyl-2-oxobutanoate + formate + 2 H(+). Its pathway is amino-acid biosynthesis; L-methionine biosynthesis via salvage pathway; L-methionine from S-methyl-5-thio-alpha-D-ribose 1-phosphate: step 5/6. In terms of biological role, catalyzes 2 different reactions between oxygen and the acireductone 1,2-dihydroxy-3-keto-5-methylthiopentene (DHK-MTPene) depending upon the metal bound in the active site. Fe-containing acireductone dioxygenase (Fe-ARD) produces formate and 2-keto-4-methylthiobutyrate (KMTB), the alpha-ketoacid precursor of methionine in the methionine recycle pathway. Ni-containing acireductone dioxygenase (Ni-ARD) produces methylthiopropionate, carbon monoxide and formate, and does not lie on the methionine recycle pathway. The protein is Acireductone dioxygenase of Microcystis aeruginosa.